Consider the following 76-residue polypeptide: MSSSQFFILCIILISSFPLHECENGKSVEASNAAKTLCMSVNCDNKDRNLTCACCLAKSKNRCYSSKSECVADCKD.

The signal sequence occupies residues methionine 1–cysteine 22. Cystine bridges form between cysteine 38-cysteine 54, cysteine 43-cysteine 74, cysteine 52-cysteine 70, and cysteine 55-cysteine 63.

It belongs to the MEG family. In terms of tissue distribution, expressed in flowers.

This chain is EMBRYO SURROUNDING FACTOR 1-like protein 8 (ESFL8), found in Arabidopsis thaliana (Mouse-ear cress).